Consider the following 447-residue polypeptide: Maintenance of mitochondrial morphology protein 1 (447 aa).

At 1-109 the chain is on the lumenal side; the sequence is MKSPNETSFT…VFSAWSFAQG (109 aa). A helical membrane pass occupies residues 110–130; it reads LVIGQLSVIVVLIFFIKFFIF. The Cytoplasmic portion of the chain corresponds to 131–447; the sequence is SEGPIKTEGP…DDISMKSTDL (317 aa). Residues 208 to 421 form the SMP-LTD domain; the sequence is SPETLDWFNV…EPRFQFIKLP (214 aa).

The protein belongs to the MMM1 family. Homodimer. Component of the ER-mitochondria encounter structure (ERMES) or MDM complex, composed of MMM1, MDM10, MDM12 and MDM34. An MMM1 homodimer associates with one molecule of MDM12 on each side in a pairwise head-to-tail manner, and the SMP-LTD domains of MMM1 and MDM12 generate a continuous hydrophobic tunnel for phospholipid trafficking.

It is found in the endoplasmic reticulum membrane. Its function is as follows. Component of the ERMES/MDM complex, which serves as a molecular tether to connect the endoplasmic reticulum (ER) and mitochondria. Components of this complex are involved in the control of mitochondrial shape and protein biogenesis, and function in nonvesicular lipid trafficking between the ER and mitochondria. The MDM12-MMM1 subcomplex functions in the major beta-barrel assembly pathway that is responsible for biogenesis of all outer membrane beta-barrel proteins, and acts in a late step after the SAM complex. The MDM10-MDM12-MMM1 subcomplex further acts in the TOM40-specific pathway after the action of the MDM12-MMM1 complex. Essential for establishing and maintaining the structure of mitochondria and maintenance of mtDNA nucleoids. This Lachancea thermotolerans (strain ATCC 56472 / CBS 6340 / NRRL Y-8284) (Yeast) protein is Maintenance of mitochondrial morphology protein 1.